Consider the following 416-residue polypeptide: Serine hydroxymethyltransferase (416 aa).

Residues Leu118 and Gly122 to Leu124 contribute to the (6S)-5,6,7,8-tetrahydrofolate site. Lys226 carries the N6-(pyridoxal phosphate)lysine modification. (6S)-5,6,7,8-tetrahydrofolate-binding positions include Glu242 and Ser350–Phe352.

The protein belongs to the SHMT family. Homodimer. Pyridoxal 5'-phosphate is required as a cofactor.

The protein resides in the cytoplasm. The catalysed reaction is (6R)-5,10-methylene-5,6,7,8-tetrahydrofolate + glycine + H2O = (6S)-5,6,7,8-tetrahydrofolate + L-serine. The protein operates within one-carbon metabolism; tetrahydrofolate interconversion. Its pathway is amino-acid biosynthesis; glycine biosynthesis; glycine from L-serine: step 1/1. Catalyzes the reversible interconversion of serine and glycine with tetrahydrofolate (THF) serving as the one-carbon carrier. This reaction serves as the major source of one-carbon groups required for the biosynthesis of purines, thymidylate, methionine, and other important biomolecules. Also exhibits THF-independent aldolase activity toward beta-hydroxyamino acids, producing glycine and aldehydes, via a retro-aldol mechanism. This chain is Serine hydroxymethyltransferase, found in Helicobacter acinonychis (strain Sheeba).